Consider the following 347-residue polypeptide: Heat-inducible transcription repressor HrcA (347 aa).

Belongs to the HrcA family.

Its function is as follows. Negative regulator of class I heat shock genes (grpE-dnaK-dnaJ and groELS operons). Prevents heat-shock induction of these operons. This Mycobacterium sp. (strain JLS) protein is Heat-inducible transcription repressor HrcA.